The following is a 103-amino-acid chain: Small ribosomal subunit protein uS10 (103 aa).

This sequence belongs to the universal ribosomal protein uS10 family. As to quaternary structure, part of the 30S ribosomal subunit.

Involved in the binding of tRNA to the ribosomes. The chain is Small ribosomal subunit protein uS10 from Campylobacter fetus subsp. fetus (strain 82-40).